Here is a 106-residue protein sequence, read N- to C-terminus: Urease subunit beta (106 aa).

Belongs to the urease beta subunit family. As to quaternary structure, heterotrimer of UreA (gamma), UreB (beta) and UreC (alpha) subunits. Three heterotrimers associate to form the active enzyme. The apoenzyme interacts with an accessory complex composed of UreD, UreF and UreG, which is required for the assembly of the nickel containing metallocenter of UreC. The UreE protein may also play a direct role as a metallochaperone in nickel transfer to the urease apoprotein.

The protein resides in the cytoplasm. It carries out the reaction urea + 2 H2O + H(+) = hydrogencarbonate + 2 NH4(+). The protein operates within nitrogen metabolism; urea degradation; CO(2) and NH(3) from urea (urease route): step 1/1. Its activity is regulated as follows. The apoenzyme can be activated in vitro in the presence of nickel ions and carbon dioxide, which promotes carboxylation of 'Lys-217' of the UreC (alpha) subunit. The polypeptide is Urease subunit beta (Klebsiella aerogenes (Enterobacter aerogenes)).